Reading from the N-terminus, the 232-residue chain is Large ribosomal subunit protein uL3 (232 aa).

The protein belongs to the universal ribosomal protein uL3 family. As to quaternary structure, part of the 50S ribosomal subunit. Forms a cluster with proteins L14 and L19.

One of the primary rRNA binding proteins, it binds directly near the 3'-end of the 23S rRNA, where it nucleates assembly of the 50S subunit. In Sorangium cellulosum (strain So ce56) (Polyangium cellulosum (strain So ce56)), this protein is Large ribosomal subunit protein uL3.